We begin with the raw amino-acid sequence, 187 residues long: Putative glutathione-dependent formaldehyde-activating enzyme (187 aa).

The 147-residue stretch at 20–166 (FQGGVLKCKC…FESLGLESYD (147 aa)) folds into the CENP-V/GFA domain. Zn(2+)-binding residues include cysteine 27, cysteine 29, cysteine 48, cysteine 50, cysteine 53, cysteine 95, and cysteine 98.

This sequence belongs to the Gfa family. The cofactor is Zn(2+).

It carries out the reaction S-(hydroxymethyl)glutathione = glutathione + formaldehyde. Its pathway is one-carbon metabolism; formaldehyde degradation; formate from formaldehyde (glutathione route): step 1/3. Catalyzes the condensation of formaldehyde and glutathione to S-hydroxymethylglutathione. In Verticillium alfalfae (strain VaMs.102 / ATCC MYA-4576 / FGSC 10136) (Verticillium wilt of alfalfa), this protein is Putative glutathione-dependent formaldehyde-activating enzyme.